Here is a 636-residue protein sequence, read N- to C-terminus: ABC transporter ATP-binding protein RamA (636 aa).

The next 5 helical transmembrane spans lie at 45 to 65 (VLVL…PLAL), 78 to 98 (AGWW…LDSA), 175 to 195 (LVDV…ALLL), 269 to 289 (GVLV…RLAA), and 297 to 317 (LLAV…ASLL). The region spanning 45 to 322 (VLVLLCSVAA…AASLLGAIVR (278 aa)) is the ABC transmembrane type-1 domain. An ABC transporter domain is found at 354–585 (LRLCGVRVLR…AGYREVFGAG (232 aa)). Residue 386–393 (GRSGAGKS) participates in ATP binding. Gly residues predominate over residues 589-606 (GAGAGAGAGADAGAGADA). Residues 589–636 (GAGAGAGAGADAGAGADAGPGPDSGAATAVGGSGPGPVRRPEPEEARP) are disordered. Residues 607–618 (GPGPDSGAATAV) are compositionally biased toward low complexity. Over residues 627 to 636 (RRPEPEEARP) the composition is skewed to basic and acidic residues.

Belongs to the ABC transporter superfamily.

The protein resides in the cell membrane. Its function is as follows. Probably involved in exporting SapB from the cell. Expression of the ram locus (ramA, ramB and ramR) induces rapid aerial mycelium formation in S.lividans. The chain is ABC transporter ATP-binding protein RamA from Streptomyces coelicolor (strain ATCC BAA-471 / A3(2) / M145).